A 96-amino-acid polypeptide reads, in one-letter code: Colicin-K immunity protein (96 aa).

A helical transmembrane segment spans residues Ala73 to Leu93.

The protein resides in the cell membrane. In terms of biological role, this protein is able to protect a cell, which harbors the plasmid ColK encoding colicin K, against colicin K. This Escherichia coli protein is Colicin-K immunity protein (cki).